A 30-amino-acid chain; its full sequence is Ranatuerin-2OK (30 aa).

Cysteines 23 and 30 form a disulfide.

In terms of tissue distribution, expressed by the skin glands.

It localises to the secreted. Functionally, antimicrobial peptide. Active against Gram-negative bacterium E.coli (MIC=12.5 uM) and against Gram-positive bacterium S.aureus (MIC=50 uM). The polypeptide is Ranatuerin-2OK (Nidirana okinavana (Kampira Falls frog)).